Here is a 201-residue protein sequence, read N- to C-terminus: Recombination protein RecR (201 aa).

Residues 57 to 72 (CQQCRNFTEEALCEIC) form a C4-type zinc finger. The Toprim domain occupies 81–176 (TTLCIVETPG…NISRIAHGVP (96 aa)).

Belongs to the RecR family.

May play a role in DNA repair. It seems to be involved in an RecBC-independent recombinational process of DNA repair. It may act with RecF and RecO. This Colwellia psychrerythraea (strain 34H / ATCC BAA-681) (Vibrio psychroerythus) protein is Recombination protein RecR.